A 157-amino-acid chain; its full sequence is Ribosome maturation factor RimP (157 aa).

It belongs to the RimP family.

It is found in the cytoplasm. In terms of biological role, required for maturation of 30S ribosomal subunits. This chain is Ribosome maturation factor RimP, found in Thermobifida fusca (strain YX).